The following is a 111-amino-acid chain: Aspartate 1-decarboxylase (111 aa).

Serine 25 acts as the Schiff-base intermediate with substrate; via pyruvic acid in catalysis. Serine 25 is subject to Pyruvic acid (Ser). Position 57 (threonine 57) interacts with substrate. Tyrosine 58 acts as the Proton donor in catalysis. Position 73–75 (73–75 (GPA)) interacts with substrate.

It belongs to the PanD family. Heterooctamer of four alpha and four beta subunits. It depends on pyruvate as a cofactor. Post-translationally, is synthesized initially as an inactive proenzyme, which is activated by self-cleavage at a specific serine bond to produce a beta-subunit with a hydroxyl group at its C-terminus and an alpha-subunit with a pyruvoyl group at its N-terminus.

The protein resides in the cytoplasm. The enzyme catalyses L-aspartate + H(+) = beta-alanine + CO2. The protein operates within cofactor biosynthesis; (R)-pantothenate biosynthesis; beta-alanine from L-aspartate: step 1/1. In terms of biological role, catalyzes the pyruvoyl-dependent decarboxylation of aspartate to produce beta-alanine. In Francisella tularensis subsp. novicida (strain U112), this protein is Aspartate 1-decarboxylase.